A 220-amino-acid chain; its full sequence is Probable chemoreceptor glutamine deamidase CheD (220 aa).

Belongs to the CheD family.

It catalyses the reaction L-glutaminyl-[protein] + H2O = L-glutamyl-[protein] + NH4(+). In terms of biological role, probably deamidates glutamine residues to glutamate on methyl-accepting chemotaxis receptors (MCPs), playing an important role in chemotaxis. This Cupriavidus metallidurans (strain ATCC 43123 / DSM 2839 / NBRC 102507 / CH34) (Ralstonia metallidurans) protein is Probable chemoreceptor glutamine deamidase CheD.